The following is a 481-amino-acid chain: tRNA-2-methylthio-N(6)-dimethylallyladenosine synthase (481 aa).

Residues 24 to 140 (KKLFIESYGC…LPNLLNEVEE (117 aa)) enclose the MTTase N-terminal domain. [4Fe-4S] cluster is bound by residues C33, C69, C103, C178, C182, and C185. Residues 164-411 (MSNGITALVA…DLQQKHAWWR (248 aa)) enclose the Radical SAM core domain. Residues 413–476 (EDFIGQTVEV…SGTLKGEAVG (64 aa)) enclose the TRAM domain.

Belongs to the methylthiotransferase family. MiaB subfamily. As to quaternary structure, monomer. [4Fe-4S] cluster serves as cofactor.

It localises to the cytoplasm. The catalysed reaction is N(6)-dimethylallyladenosine(37) in tRNA + (sulfur carrier)-SH + AH2 + 2 S-adenosyl-L-methionine = 2-methylsulfanyl-N(6)-dimethylallyladenosine(37) in tRNA + (sulfur carrier)-H + 5'-deoxyadenosine + L-methionine + A + S-adenosyl-L-homocysteine + 2 H(+). Functionally, catalyzes the methylthiolation of N6-(dimethylallyl)adenosine (i(6)A), leading to the formation of 2-methylthio-N6-(dimethylallyl)adenosine (ms(2)i(6)A) at position 37 in tRNAs that read codons beginning with uridine. In Flavobacterium psychrophilum (strain ATCC 49511 / DSM 21280 / CIP 103535 / JIP02/86), this protein is tRNA-2-methylthio-N(6)-dimethylallyladenosine synthase.